The chain runs to 267 residues: Apolipoprotein A-I (267 aa).

The first 18 residues, 1-18 (MKAAVLTLAVLFLTGSQA), serve as a signal peptide directing secretion. Tandem repeats lie at residues 68 to 89 (LKLLDNWDSLTSTVNKLREDLG) and 90 to 111 (PVTQEFWDNLEKETGWLRQEMS). The interval 68–267 (LKLLDNWDSL…EEYAKKLSSQ (200 aa)) is 10 X approximate tandem repeats. A Methionine sulfoxide modification is found at methionine 110. A 3; half-length repeat occupies 112–122 (KDLEEVKAKVQ). 5 consecutive repeat copies span residues 123 to 144 (PYLDDFQKKWQEEVKLYSQKLE), 145 to 166 (PLRTEFQEGALQKLQDLQEKLS), 167 to 188 (PLAEQVRDRARAHVDTLRTQLA), 189 to 210 (PYSDELRQRLATRLEVLKESGG), and 211 to 232 (ASLAEYHAKASEHLSALGEKAK). A 9; half-length repeat occupies 233 to 243 (PALEDLRQGLL). Repeat 10 spans residues 244–267 (PVLESFKVSFLSALEEYAKKLSSQ).

Belongs to the apolipoprotein A1/A4/E family. In terms of assembly, homodimer. Interacts with APOA1BP and CLU. Component of a sperm activating protein complex (SPAP), consisting of APOA1, an immunoglobulin heavy chain, an immunoglobulin light chain and albumin. Interacts with NDRG1. Interacts with SCGB3A2. Interacts with NAXE and YJEFN3. Post-translationally, glycosylated. Palmitoylated. In terms of processing, phosphorylation sites are present in the extracellular medium.

The protein resides in the secreted. Participates in the reverse transport of cholesterol from tissues to the liver for excretion by promoting cholesterol efflux from tissues and by acting as a cofactor for the lecithin cholesterol acyltransferase (LCAT). As part of the SPAP complex, activates spermatozoa motility. The chain is Apolipoprotein A-I (APOA1) from Cebus imitator (Panamanian white-faced capuchin).